The primary structure comprises 142 residues: Large ribosomal subunit protein uL11 (142 aa).

This sequence belongs to the universal ribosomal protein uL11 family. As to quaternary structure, part of the ribosomal stalk of the 50S ribosomal subunit. Interacts with L10 and the large rRNA to form the base of the stalk. L10 forms an elongated spine to which L12 dimers bind in a sequential fashion forming a multimeric L10(L12)X complex. Post-translationally, one or more lysine residues are methylated.

In terms of biological role, forms part of the ribosomal stalk which helps the ribosome interact with GTP-bound translation factors. The sequence is that of Large ribosomal subunit protein uL11 from Cronobacter sakazakii (strain ATCC BAA-894) (Enterobacter sakazakii).